The sequence spans 292 residues: ATP phosphoribosyltransferase (292 aa).

This sequence belongs to the ATP phosphoribosyltransferase family. Long subfamily. Requires Mg(2+) as cofactor.

The protein resides in the cytoplasm. It catalyses the reaction 1-(5-phospho-beta-D-ribosyl)-ATP + diphosphate = 5-phospho-alpha-D-ribose 1-diphosphate + ATP. The protein operates within amino-acid biosynthesis; L-histidine biosynthesis; L-histidine from 5-phospho-alpha-D-ribose 1-diphosphate: step 1/9. Its activity is regulated as follows. Feedback inhibited by histidine. Functionally, catalyzes the condensation of ATP and 5-phosphoribose 1-diphosphate to form N'-(5'-phosphoribosyl)-ATP (PR-ATP). Has a crucial role in the pathway because the rate of histidine biosynthesis seems to be controlled primarily by regulation of HisG enzymatic activity. In Thermodesulfovibrio yellowstonii (strain ATCC 51303 / DSM 11347 / YP87), this protein is ATP phosphoribosyltransferase.